Consider the following 143-residue polypeptide: Actin-depolymerizing factor 5 (143 aa).

In terms of domain architecture, ADF-H spans 11-143; sequence GMRVTDECTS…GFDIIQDRAK (133 aa).

It belongs to the actin-binding proteins ADF family. Expressed exclusively in root tip meristem.

The protein localises to the cytoplasm. It localises to the cytoskeleton. Functionally, actin-depolymerizing protein. Severs actin filaments (F-actin) and binds to actin monomers. The polypeptide is Actin-depolymerizing factor 5 (ADF5) (Arabidopsis thaliana (Mouse-ear cress)).